A 353-amino-acid chain; its full sequence is Glutamine synthetase cytosolic isozyme 1-5 (353 aa).

Residue T2 is modified to N-acetylthreonine. S3 is subject to Phosphoserine. One can recognise a GS beta-grasp domain in the interval 19 to 99; that stretch reads IIAEYIWIGG…VMCDAYRPAG (81 aa). Residues 106 to 353 form the GS catalytic domain; the sequence is NRHKAVKIFD…TSMIAETTIL (248 aa).

It belongs to the glutamine synthetase family. In terms of assembly, homooctamer. As to expression, not expressed in roots.

It localises to the cytoplasm. It carries out the reaction L-glutamate + NH4(+) + ATP = L-glutamine + ADP + phosphate + H(+). The polypeptide is Glutamine synthetase cytosolic isozyme 1-5 (GLN1-5) (Arabidopsis thaliana (Mouse-ear cress)).